The following is a 161-amino-acid chain: Transcriptional repressor NrdR (161 aa).

Residues 1-11 are compositionally biased toward polar residues; the sequence is MRCPSCSSLDT. The disordered stretch occupies residues 1–20; that stretch reads MRCPSCSSLDTQVKDSRPTE. The segment at 3–34 is a zinc-finger region; sequence CPSCSSLDTQVKDSRPTEDSAVIRRRRVCMAC. Residues 49–139 form the ATP-cone domain; the sequence is LTVIKRNGRR…VYRNFREAKD (91 aa).

This sequence belongs to the NrdR family. Zn(2+) serves as cofactor.

Negatively regulates transcription of bacterial ribonucleotide reductase nrd genes and operons by binding to NrdR-boxes. This is Transcriptional repressor NrdR from Rhodopseudomonas palustris (strain BisB18).